An 81-amino-acid chain; its full sequence is NAD(P)H-quinone oxidoreductase subunit L (81 aa).

2 consecutive transmembrane segments (helical) span residues 13–33 (LLVI…IPLF) and 51–71 (LGIY…APFL).

It belongs to the complex I NdhL subunit family. In terms of assembly, NDH-1 can be composed of about 15 different subunits; different subcomplexes with different compositions have been identified which probably have different functions.

It is found in the cellular thylakoid membrane. The enzyme catalyses a plastoquinone + NADH + (n+1) H(+)(in) = a plastoquinol + NAD(+) + n H(+)(out). It catalyses the reaction a plastoquinone + NADPH + (n+1) H(+)(in) = a plastoquinol + NADP(+) + n H(+)(out). NDH-1 shuttles electrons from an unknown electron donor, via FMN and iron-sulfur (Fe-S) centers, to quinones in the respiratory and/or the photosynthetic chain. The immediate electron acceptor for the enzyme in this species is believed to be plastoquinone. Couples the redox reaction to proton translocation, and thus conserves the redox energy in a proton gradient. Cyanobacterial NDH-1 also plays a role in inorganic carbon-concentration. This Synechococcus sp. (strain WH7803) protein is NAD(P)H-quinone oxidoreductase subunit L.